Here is a 1038-residue protein sequence, read N- to C-terminus: Zinc finger protein 628 (1038 aa).

The interval 1–31 is disordered; the sequence is MAGSHVDMAPASTTEGTGEKPGPTAPAPTPA. Low complexity predominate over residues 13–22; the sequence is TTEGTGEKPG. 6 consecutive C2H2-type zinc fingers follow at residues 34–56, 62–84, 90–112, 118–140, 146–168, and 174–196; these read YECG…QRTH, YKCP…QRGH, YQCP…RSVH, FTCG…LRQH, YPCP…RHVH, and YTCG…QRVH. Thr-197 bears the Phosphothreonine mark. The segment at 202-224 adopts a C2H2-type 7 zinc-finger fold; it reads FRCPLCPKTFTHSSNLLLHHRTH. 2 disordered regions span residues 220 to 242 and 254 to 273; these read HHRT…ETSR and LQPR…PPVV. Pro residues-rich tracts occupy residues 227–237 and 257–273; these read APGPAPAPAPP and RSPP…PPVV. 7 C2H2-type zinc fingers span residues 346–368, 376–398, 446–468, 474–496, 502–524, 530–552, and 558–580; these read FACL…QHSH, FRCG…QQCH, YKCA…LRDH, YQCG…QRVH, FTCG…LRLH, YACT…RHVH, and HSCS…QRVH. At Thr-581 the chain carries Phosphothreonine. C2H2-type zinc fingers lie at residues 586 to 608 and 614 to 636; these read FRCP…QRTH and FACP…LRTH. Disordered stretches follow at residues 637 to 661 and 717 to 763; these read TPAT…LAAA and PSSV…AGQG. A compositionally biased stretch (pro residues) spans 723 to 733; that stretch reads PTPPPPPPPPK. Over residues 734–756 the composition is skewed to low complexity; sequence VILLPPASAGGPGSGAARPGPRS. 4 consecutive repeat copies span residues 811–821, 822–832, 833–843, and 844–854. The 4 X 11 AA tandem repeats of VQLQP-[AL]-[QT]-[EG]-[VQ]-[ATV]-[ST] stretch occupies residues 811–854; that stretch reads VQLQPAQEVATVQLQPAQEVTTVQLQPAQEVTTVQLQPLTGQVS. Residues 922 to 1038 form an interaction with TAF4B region; that stretch reads DGEQTRLCVQ…LPAVQLVHTF (117 aa).

As to quaternary structure, interacts with TAF4B. As to expression, expressed widely in testis, in both germline and somatic cells. Seems to have particularly strong expression in meiotic spermatocytes, postmeiotic round spermatids and Sertoli cells. Not detected in elongating spermatids or mature sperm (at protein level). Expressed in testis, ovary, spleen, lung, brain, liver and kidney. Expressed in D3 embryonic stem cells and F9 embryonal carcinoma cells.

It is found in the nucleus. Functionally, transcriptional activator. Binds DNA on GT-box consensus sequence 5'-TTGGTT-3'. Plays a role in spermiogenesis. In Mus musculus (Mouse), this protein is Zinc finger protein 628.